Here is a 78-residue protein sequence, read N- to C-terminus: Large ribosomal subunit protein bL28 (78 aa).

Belongs to the bacterial ribosomal protein bL28 family.

The protein is Large ribosomal subunit protein bL28 of Marinobacter nauticus (strain ATCC 700491 / DSM 11845 / VT8) (Marinobacter aquaeolei).